We begin with the raw amino-acid sequence, 287 residues long: tRNA (guanine(9)-N1)-methyltransferase (287 aa).

Positions 1 to 27 (MSDTSDLVDGKWQRLPPVPEGMSKSQW) are disordered. The 194-residue stretch at 79–272 (EPRVNRDQVA…SVIPSRKLDP (194 aa)) folds into the SAM-dependent MTase TRM10-type domain. Residues 179-180 (LT), G199, 203-207 (DKNRH), C211, L225, and 237-239 (KVL) contribute to the S-adenosyl-L-methionine site. D203 acts as the Proton acceptor in catalysis. Residues 268–278 (RKLDPVKEKEQ) show a composition bias toward basic and acidic residues. Residues 268 to 287 (RKLDPVKEKEQQQQQQQQQQ) are disordered.

It belongs to the class IV-like SAM-binding methyltransferase superfamily. TRM10 family. In terms of assembly, monomer.

It is found in the cytoplasm. The protein resides in the nucleus. The catalysed reaction is guanosine(9) in tRNA + S-adenosyl-L-methionine = N(1)-methylguanosine(9) in tRNA + S-adenosyl-L-homocysteine + H(+). Functionally, S-adenosyl-L-methionine-dependent guanine N(1)-methyltransferase that catalyzes the formation of N(1)-methylguanine at position 9 (m1G9) in cytoplasmic tRNA. In Candida glabrata (strain ATCC 2001 / BCRC 20586 / JCM 3761 / NBRC 0622 / NRRL Y-65 / CBS 138) (Yeast), this protein is tRNA (guanine(9)-N1)-methyltransferase.